The chain runs to 192 residues: Flavin prenyltransferase UbiX (192 aa).

FMN is bound by residues 10 to 12 (GAS), serine 36, 92 to 95 (SVAT), and arginine 127. Dimethylallyl phosphate is bound by residues tyrosine 157 and lysine 173.

Belongs to the UbiX/PAD1 family.

The enzyme catalyses dimethylallyl phosphate + FMNH2 = prenylated FMNH2 + phosphate. Its function is as follows. Flavin prenyltransferase that catalyzes the synthesis of the prenylated FMN cofactor (prenyl-FMN) for 4-hydroxy-3-polyprenylbenzoic acid decarboxylase UbiD. The prenyltransferase is metal-independent and links a dimethylallyl moiety from dimethylallyl monophosphate (DMAP) to the flavin N5 and C6 atoms of FMN. The chain is Flavin prenyltransferase UbiX from Chlamydia trachomatis serovar D (strain ATCC VR-885 / DSM 19411 / UW-3/Cx).